The sequence spans 145 residues: 3-dehydroquinate dehydratase (145 aa).

Residue Tyr-24 is the Proton acceptor of the active site. The substrate site is built by Asn-76, His-82, and Asp-89. His-102 (proton donor) is an active-site residue. Substrate is bound by residues 103 to 104 (LS) and Arg-113.

It belongs to the type-II 3-dehydroquinase family. In terms of assembly, homododecamer.

The catalysed reaction is 3-dehydroquinate = 3-dehydroshikimate + H2O. The protein operates within metabolic intermediate biosynthesis; chorismate biosynthesis; chorismate from D-erythrose 4-phosphate and phosphoenolpyruvate: step 3/7. Catalyzes a trans-dehydration via an enolate intermediate. The sequence is that of 3-dehydroquinate dehydratase from Nitrosomonas eutropha (strain DSM 101675 / C91 / Nm57).